Reading from the N-terminus, the 298-residue chain is NAD-dependent L-serine dehydrogenase (298 aa).

Residues 2–31 (KQIAFIGLGHMGAPMATNLLKAGYLLNVFD), 65–66 (LP), P66, and T96 contribute to the NAD(+) site. K171 is an active-site residue. Position 246 (K246) interacts with NAD(+).

The protein belongs to the HIBADH-related family. In terms of assembly, homotetramer, dimer of dimers.

The catalysed reaction is L-serine + NAD(+) = aminoacetaldehyde + CO2 + NADH. It functions in the pathway amino-acid degradation. NAD-dependent L-serine dehydrogenase that catalyzes the oxidation of L-serine and methyl-L-serine and is possibly involved in serine catabolism. Has low activity toward beta-hydroxyisobutyrate. The polypeptide is NAD-dependent L-serine dehydrogenase (Pseudomonas aeruginosa (strain ATCC 15692 / DSM 22644 / CIP 104116 / JCM 14847 / LMG 12228 / 1C / PRS 101 / PAO1)).